A 439-amino-acid polypeptide reads, in one-letter code: 23S rRNA (uracil(1939)-C(5))-methyltransferase RlmD (439 aa).

Residues 10 to 68 (KSTQPQRIEFTVDSLDHHCVGIGRHQGKAIFIEGALPGEQVKARILDDKKQYAHAALQQ) form the TRAM domain. Residues cysteine 81, cysteine 87, cysteine 90, and cysteine 169 each coordinate [4Fe-4S] cluster. Residues glutamine 273, phenylalanine 302, asparagine 307, glutamate 323, aspartate 350, and aspartate 371 each contribute to the S-adenosyl-L-methionine site. The active-site Nucleophile is cysteine 397.

It belongs to the class I-like SAM-binding methyltransferase superfamily. RNA M5U methyltransferase family. RlmD subfamily.

The enzyme catalyses uridine(1939) in 23S rRNA + S-adenosyl-L-methionine = 5-methyluridine(1939) in 23S rRNA + S-adenosyl-L-homocysteine + H(+). In terms of biological role, catalyzes the formation of 5-methyl-uridine at position 1939 (m5U1939) in 23S rRNA. The polypeptide is 23S rRNA (uracil(1939)-C(5))-methyltransferase RlmD (Aeromonas salmonicida (strain A449)).